We begin with the raw amino-acid sequence, 76 residues long: Sulfur carrier protein TusA (76 aa).

Catalysis depends on Cys15, which acts as the Cysteine persulfide intermediate.

Belongs to the sulfur carrier protein TusA family. As to quaternary structure, mostly a monomer, a small portion forms homodimer via intermolecular disulfide bonds. Tightly interacts with DsrEFH.

The protein resides in the cytoplasm. Its pathway is energy metabolism; sulfur metabolism. Its function is as follows. Sulfur carrier protein involved in sulfur trafficking for oxidative dissimilatory sulfur metabolism. Component of a sulfur relay system that starts with the sulfur-mobilizing rhodanese-like protein Rhd_2599 (Alvin_2599), which transfers the sulfur from a low-molecular-weight thiol, maybe glutathione, to the TusA protein (Alvin_2600); TusA serves as the sulfur donor for DsrEFH, which persulfurates DsrC; persulfurated DsrC very probably serves as a direct substrate for reverse-acting sulfite reductase, DsrAB. TusA seems to be not exclusively dedicated to sulfur oxidation and may have other important roles in the cell. Might also act as a sulfur mediator required for 2-thiouridine formation of tRNA. This is Sulfur carrier protein TusA from Allochromatium vinosum (strain ATCC 17899 / DSM 180 / NBRC 103801 / NCIMB 10441 / D) (Chromatium vinosum).